Here is a 123-residue protein sequence, read N- to C-terminus: Ribosome-binding factor A (123 aa).

The protein belongs to the RbfA family. In terms of assembly, monomer. Binds 30S ribosomal subunits, but not 50S ribosomal subunits or 70S ribosomes.

The protein localises to the cytoplasm. Functionally, one of several proteins that assist in the late maturation steps of the functional core of the 30S ribosomal subunit. Associates with free 30S ribosomal subunits (but not with 30S subunits that are part of 70S ribosomes or polysomes). Required for efficient processing of 16S rRNA. May interact with the 5'-terminal helix region of 16S rRNA. The protein is Ribosome-binding factor A of Syntrophus aciditrophicus (strain SB).